The primary structure comprises 494 residues: Sphingosine-1-phosphate transporter MFSD2B (494 aa).

Residues 1 to 12 (MSVPHGPTPAPV) are compositionally biased toward pro residues. The tract at residues 1–26 (MSVPHGPTPAPVAEPHTQEPGSDKRD) is disordered. The next 10 membrane-spanning stretches (helical) occupy residues 103–123 (LMPW…FLWF), 140–160 (CLFQ…TMIL), 179–199 (MAGT…AHGS), 223–243 (IAAA…CLGV), 277–297 (VVSF…LVLF), 310–330 (NLVL…EWVL), 339–359 (AFGI…PSAP), 360–380 (VAYV…LLPW), 402–422 (TIFY…ALGI), and 449–469 (VLIG…LLVG). The disordered stretch occupies residues 473–494 (KMPRQDTSSQLSLRRRTSYSLA). Residues 485–494 (LRRRTSYSLA) show a composition bias toward basic residues.

Belongs to the major facilitator superfamily. In terms of tissue distribution, widely expressed with highest expression in spleen, lung and testis. Predominantly expressed in erythroid lineages giving rise to erythrocytes and platelets, but absent in lymphoid lineages.

It is found in the cell membrane. The catalysed reaction is sphing-4-enine 1-phosphate(in) = sphing-4-enine 1-phosphate(out). It catalyses the reaction sphinganine 1-phosphate(in) = sphinganine 1-phosphate(out). It carries out the reaction sphinga-4E,14Z-dienine-1-phosphate(in) = sphinga-4E,14Z-dienine-1-phosphate(out). Lipid transporter that specifically mediates export of sphingosine-1-phosphate in red blood cells and platelets. Sphingosine-1-phosphate is a signaling sphingolipid and its export from red blood cells into in the plasma is required for red blood cell morphology. Sphingosine-1-phosphate export from platelets is required for platelet aggregation and thrombus formation. Mediates the export of different sphingosine-1-phosphate (S1P) species, including S1P(d18:0) (sphinganine 1-phosphate), S1P (d18:1) (sphing-4-enine 1-phosphate) and S1P (d18:2) (sphinga-4E,14Z-dienine-1-phosphate). Release of sphingosine-1-phosphate is facilitated by a proton gradient. In contrast, cations, such as sodium, are not required to drive sphingosine-1-phosphate transport. In addition to export, also able to mediate S1P import. Does not transport lysophosphatidylcholine (LPC). This Mus musculus (Mouse) protein is Sphingosine-1-phosphate transporter MFSD2B.